Consider the following 434-residue polypeptide: Trigger factor (434 aa).

The PPIase FKBP-type domain occupies 160-245 (GDKAKINFVG…LNEVQAANLP (86 aa)).

It belongs to the FKBP-type PPIase family. Tig subfamily.

It localises to the cytoplasm. It carries out the reaction [protein]-peptidylproline (omega=180) = [protein]-peptidylproline (omega=0). Involved in protein export. Acts as a chaperone by maintaining the newly synthesized protein in an open conformation. Functions as a peptidyl-prolyl cis-trans isomerase. The polypeptide is Trigger factor (Shewanella halifaxensis (strain HAW-EB4)).